Reading from the N-terminus, the 738-residue chain is LPS-assembly protein LptD (738 aa).

A signal peptide spans 1–26 (MEHKRNNILLAGLFFLLLGLVSIARA).

Belongs to the LptD family. In terms of assembly, component of the lipopolysaccharide transport and assembly complex. Interacts with LptE and LptA.

It is found in the cell outer membrane. In terms of biological role, together with LptE, is involved in the assembly of lipopolysaccharide (LPS) at the surface of the outer membrane. This Nitrosococcus oceani (strain ATCC 19707 / BCRC 17464 / JCM 30415 / NCIMB 11848 / C-107) protein is LPS-assembly protein LptD.